A 388-amino-acid chain; its full sequence is Xylose isomerase (388 aa).

Residues His-54 and Asp-57 contribute to the active site. Positions 181, 217, 220, 245, 255, 257, and 287 each coordinate Mg(2+).

Belongs to the xylose isomerase family. In terms of assembly, homotetramer. Mg(2+) is required as a cofactor.

The protein localises to the cytoplasm. The catalysed reaction is alpha-D-xylose = alpha-D-xylulofuranose. This is Xylose isomerase from Streptomyces olivaceoviridis (Streptomyces corchorusii).